A 92-amino-acid chain; its full sequence is Small ribosomal subunit protein uS19 (92 aa).

It belongs to the universal ribosomal protein uS19 family.

Functionally, protein S19 forms a complex with S13 that binds strongly to the 16S ribosomal RNA. The sequence is that of Small ribosomal subunit protein uS19 from Bacillus cytotoxicus (strain DSM 22905 / CIP 110041 / 391-98 / NVH 391-98).